Here is a 183-residue protein sequence, read N- to C-terminus: Ankyrin repeat domain-containing protein 39 (183 aa).

4 ANK repeats span residues 30-59 (DFER…DPSQ), 63-92 (AGYT…KCDA), 96-125 (GGAT…NPRL), and 129-158 (DGMT…ALKA). At Ser-153 the chain carries Phosphoserine.

Belongs to the ANKRD39 family.

The protein is Ankyrin repeat domain-containing protein 39 (ANKRD39) of Bos taurus (Bovine).